The sequence spans 445 residues: tRNA-2-methylthio-N(6)-dimethylallyladenosine synthase (445 aa).

Positions 13-129 (KKLFIKTYGC…LPAMARAGRG (117 aa)) constitute an MTTase N-terminal domain. Positions 22, 58, 92, 163, 167, and 170 each coordinate [4Fe-4S] cluster. The Radical SAM core domain occupies 149–383 (TRRAPAAFLT…LTSQQKAAQE (235 aa)). The TRAM domain occupies 383–445 (EGMVGRELGV…PNSLAGVLAA (63 aa)).

This sequence belongs to the methylthiotransferase family. MiaB subfamily. In terms of assembly, monomer. It depends on [4Fe-4S] cluster as a cofactor.

The protein localises to the cytoplasm. The enzyme catalyses N(6)-dimethylallyladenosine(37) in tRNA + (sulfur carrier)-SH + AH2 + 2 S-adenosyl-L-methionine = 2-methylsulfanyl-N(6)-dimethylallyladenosine(37) in tRNA + (sulfur carrier)-H + 5'-deoxyadenosine + L-methionine + A + S-adenosyl-L-homocysteine + 2 H(+). Functionally, catalyzes the methylthiolation of N6-(dimethylallyl)adenosine (i(6)A), leading to the formation of 2-methylthio-N6-(dimethylallyl)adenosine (ms(2)i(6)A) at position 37 in tRNAs that read codons beginning with uridine. The chain is tRNA-2-methylthio-N(6)-dimethylallyladenosine synthase from Paracoccus denitrificans (strain Pd 1222).